We begin with the raw amino-acid sequence, 128 residues long: Large ribosomal subunit protein bL17 (128 aa).

This sequence belongs to the bacterial ribosomal protein bL17 family. Part of the 50S ribosomal subunit. Contacts protein L32.

This is Large ribosomal subunit protein bL17 from Edwardsiella ictaluri (strain 93-146).